The following is a 276-amino-acid chain: Urease accessory protein UreD (276 aa).

This sequence belongs to the UreD family. In terms of assembly, ureD, UreF and UreG form a complex that acts as a GTP-hydrolysis-dependent molecular chaperone, activating the urease apoprotein by helping to assemble the nickel containing metallocenter of UreC. The UreE protein probably delivers the nickel.

It localises to the cytoplasm. In terms of biological role, required for maturation of urease via the functional incorporation of the urease nickel metallocenter. In Paracidovorax citrulli (strain AAC00-1) (Acidovorax citrulli), this protein is Urease accessory protein UreD.